A 357-amino-acid polypeptide reads, in one-letter code: D-alanine--D-alanine ligase (357 aa).

The ATP-grasp domain maps to 134 to 339 (KQLFEHRGLP…YPDLIAKLID (206 aa)). 167-222 (NDKLTYPVFVKPANLGSSVGISKCNNEEELKSGITEAFQFDRKLVIEQGINAREIE) lines the ATP pocket. The Mg(2+) site is built by D293, E306, and N308.

It belongs to the D-alanine--D-alanine ligase family. Mg(2+) serves as cofactor. Mn(2+) is required as a cofactor.

It is found in the cytoplasm. It carries out the reaction 2 D-alanine + ATP = D-alanyl-D-alanine + ADP + phosphate + H(+). It functions in the pathway cell wall biogenesis; peptidoglycan biosynthesis. In terms of biological role, cell wall formation. In Staphylococcus epidermidis (strain ATCC 12228 / FDA PCI 1200), this protein is D-alanine--D-alanine ligase.